Reading from the N-terminus, the 205-residue chain is Holliday junction branch migration complex subunit RuvA (205 aa).

The interval Met-1 to Ala-64 is domain I. Positions Glu-65–Thr-143 are domain II. The flexible linker stretch occupies residues Leu-144–Ser-154. Residues Ser-154–Lys-205 are domain III.

Belongs to the RuvA family. As to quaternary structure, homotetramer. Forms an RuvA(8)-RuvB(12)-Holliday junction (HJ) complex. HJ DNA is sandwiched between 2 RuvA tetramers; dsDNA enters through RuvA and exits via RuvB. An RuvB hexamer assembles on each DNA strand where it exits the tetramer. Each RuvB hexamer is contacted by two RuvA subunits (via domain III) on 2 adjacent RuvB subunits; this complex drives branch migration. In the full resolvosome a probable DNA-RuvA(4)-RuvB(12)-RuvC(2) complex forms which resolves the HJ.

It is found in the cytoplasm. Its function is as follows. The RuvA-RuvB-RuvC complex processes Holliday junction (HJ) DNA during genetic recombination and DNA repair, while the RuvA-RuvB complex plays an important role in the rescue of blocked DNA replication forks via replication fork reversal (RFR). RuvA specifically binds to HJ cruciform DNA, conferring on it an open structure. The RuvB hexamer acts as an ATP-dependent pump, pulling dsDNA into and through the RuvAB complex. HJ branch migration allows RuvC to scan DNA until it finds its consensus sequence, where it cleaves and resolves the cruciform DNA. This is Holliday junction branch migration complex subunit RuvA from Pseudomonas entomophila (strain L48).